The chain runs to 662 residues: Methyl-accepting chemotaxis protein McpB (662 aa).

Residues 1-16 (MKTFINWLKKPSISKK) are Cytoplasmic-facing. A helical transmembrane segment spans residues 17–37 (LIVSFIAILIIPILILEFSSY). The Extracellular segment spans residues 38 to 282 (RSASGKLDQE…IKDASKSVLT (245 aa)). The Cache domain occupies 153-229 (VTDPYVAASD…KAGEKLSGDW (77 aa)). The chain crosses the membrane as a helical span at residues 283 to 303 (TGMIVLIASIVAGGILILFIV). The HAMP domain maps to 304 to 356 (RSITKPLKRLVQSSKTISRGDLTETIEIHSKDELGELGESFNEMGQSLRSLIS). Residues 304–662 (RSITKPLKRL…RDLTKQFKIE (359 aa)) lie on the Cytoplasmic side of the membrane. Glutamate methyl ester (Gln) is present on residues Gln-371 and Gln-595. Residues 375-611 (SAGQTSKATE…HVSAAVSGIA (237 aa)) form the Methyl-accepting transducer domain. Glu-630 and Glu-637 each carry glutamate methyl ester (Glu).

The protein belongs to the methyl-accepting chemotaxis (MCP) protein family. In terms of assembly, interacts with FloT. Some glutamine residues are deamidated to glutamate by CheD and subsequently methylated. Post-translationally, the demethylation is selective. Gln-371 is demethylated only upon asparagine addition whereas Glu-637 is demethylated only upon asparagine removal. Glu-630 appears indiscriminate and is demethylated upon both addition and removal of asparagine.

The protein localises to the cell membrane. The protein resides in the membrane raft. In terms of biological role, chemotactic-signal transducers respond to changes in the concentration of attractants and repellents in the environment, transduce a signal from the outside to the inside of the cell, and facilitate sensory adaptation through the variation of the level of methylation. All amino acids serve as attractants in B.subtilis, they appear to cause an increase in the turnover methyl groups, leading to methylation of an unidentified acceptor, while repellents have been shown to cause a decrease in methyl group turnover. The methyl groups are added by a methyltransferase and removed by a methylesterase. McpB is required for taxis towards asparagine, aspartate, glutamine, and histidine. The chain is Methyl-accepting chemotaxis protein McpB (mcpB) from Bacillus subtilis (strain 168).